The chain runs to 206 residues: Small ribosomal subunit protein uS4 (206 aa).

Residues 96-156 (CRLDNVVYRM…EKSKNQLRIA (61 aa)) form the S4 RNA-binding domain.

It belongs to the universal ribosomal protein uS4 family. In terms of assembly, part of the 30S ribosomal subunit. Contacts protein S5. The interaction surface between S4 and S5 is involved in control of translational fidelity.

Its function is as follows. One of the primary rRNA binding proteins, it binds directly to 16S rRNA where it nucleates assembly of the body of the 30S subunit. In terms of biological role, with S5 and S12 plays an important role in translational accuracy. This is Small ribosomal subunit protein uS4 from Ectopseudomonas mendocina (strain ymp) (Pseudomonas mendocina).